The chain runs to 65 residues: Ovary maturating parsin (65 aa).

Low complexity predominate over residues Pro17 to Ala28. The tract at residues Pro17–Arg36 is disordered.

As to quaternary structure, monomer.

Its function is as follows. Neurohormone that anticipates ovarian maturation. Acts as a true gonadotropin and stimulates vitellogenin biosynthesis. This Locusta migratoria (Migratory locust) protein is Ovary maturating parsin.